A 659-amino-acid chain; its full sequence is Interferon-induced GTP-binding protein Mx2 (659 aa).

The 274-residue stretch at 65-338 (DLALPAIAVI…LISHICKSLP (274 aa)) folds into the Dynamin-type G domain. A G1 motif region spans residues 75–82 (GDQSSGKS). 75–82 (GDQSSGKS) is a binding site for GTP. The interval 100–102 (VTR) is G2 motif. The interval 176–179 (DLPG) is G3 motif. Residues 176–180 (DLPGI) and 245–248 (TKPD) each bind GTP. Residues 245–248 (TKPD) are G4 motif. The tract at residues 277 to 280 (KCRG) is G5 motif. Positions 547-567 (EAEEEERKHGKSRSSQSKNLQ) are disordered. A GED domain is found at 571–659 (MDEIFQHLNA…AQRRLAKFPG (89 aa)).

It belongs to the TRAFAC class dynamin-like GTPase superfamily. Dynamin/Fzo/YdjA family.

It localises to the cytoplasm. Functionally, interferon-induced dynamin-like GTPase with antiviral activity against vesicular stomatitis virus (VSV). The chain is Interferon-induced GTP-binding protein Mx2 (Mx2) from Rattus norvegicus (Rat).